Here is a 1247-residue protein sequence, read N- to C-terminus: MAKYNNNNYANKATNLKQQVVLPTYTLDSNLVLLPGIMYNVTFSRFKAAALLYRYKNFISQVSIINNLLSEYDFNSGNSNEEERSETEQKIEQSSLGQPETYHEINPSVISTEAVEGIKEFFQYETNMKTGRGGKGEKEAKSTNDGIKEFDWLTLAIIPNLDKIKDPETNYSIGDAAKLTNVVTVARIIGIVDDSTNIKLTLQAITRGVQITDDSKMNQHKNGLKTNEQVIGIDWNHNVSDLKGKFNALQKNYQQLFQSIDKFLIDYREALDYNKNNSNNKNGNLSLIKGNATINNNKNSDDKSNQDIKSQNLLTLNPLANALYMQLVGSKDFNKAFHRLEKLFSQVSKNDEYKIDNETYLRLVDLTCGILPFPNFQKLALLNKYKLDDRSVLINEMILQLIQIFENLQTNNSFVNNWFHSEATNIQKANVVANQLKSIRNLLEGMTKNRPIKSNKRNPGPASSSGPSFSNGKSSPGRANARPKSNHQDGFNGNDGDYNDVDDDDDGDEDLKAIFNFIKHKLPTISTLSADSKRLILKDFKRVKASANSPGGGGNSDFHVLRNYLEIVMDIPWDNYVTKFKSNKDIDLKLAKKQLDDDHYGLEHVKKRLIQYLVVLKLLGINAEKDQSDKSQPIKDNSKDSPNSSSKALTKSPTSSLSRKTISSIVIANKDETYLAKQQAKTTNQKSITEAKTNPSTTMITSNESIHVSKNNKSPIIMLAGPPGTGKTSLAKSIASALGRNFQRISLGGIKDESEIRGHRRTYVGAMPGLLIQALRKSRCMNPVILLDEIDKVIGGNNSGGVNKFNGDPSAALLEVLDPEQNNTFIDHYLGFPIDLSQVIFICTANDPWNMTRPLLDRLETIEIGAYDYNEKLIIGKKYLLPRQIKRNGFPVVDTKKMTTVVAGSSNQDEFIRINDATMKKVILDYTRGEAGVRNFERRLGTLCRFKAVEYCEWLNKDIKNYNPIIDENDLPIYLGVPYSSGDVTTEGTVGVGVVHGLSYNSDGSGSVLVFESIGFDRRISNKEHNGGNGATLNMTGRLGEVLMESGKIGLVFIKSMIYKNILKFDNNNNNKHLLLDKYNNLDIHMHVPMGSVSKDGPSAGVTMALSFLSVLLDKPVPSDIAMTGEITLRGIILPIGGVKEKLMGAHLNSNIKRMIVPRENRKDLIKEYSRSIEEAGEVLDHHLINDLIKDNEDKEFKLTQVEEYYQNKYGISLFYAKEFYDIIKIVWNEDEVLLKQDNSRLLEYHI.

The Lon N-terminal domain occupies 22–402; the sequence is LPTYTLDSNL…LINEMILQLI (381 aa). Disordered stretches follow at residues 76 to 103, 447 to 503, and 626 to 655; these read SGNSNEEERSETEQKIEQSSLGQPETYH, TKNR…DVDD, and DQSDKSQPIKDNSKDSPNSSSKALTKSPTS. Residues 459-477 show a composition bias toward low complexity; it reads PGPASSSGPSFSNGKSSPG. Residues 626–639 show a composition bias toward basic and acidic residues; sequence DQSDKSQPIKDNSK. Position 721–728 (721–728) interacts with ATP; it reads GPPGTGKT. A Lon proteolytic domain is found at 989–1230; sequence TVGVGVVHGL…YDIIKIVWNE (242 aa). Catalysis depends on residues S1099 and K1142.

The protein belongs to the peptidase S16 family.

It is found in the peroxisome matrix. It catalyses the reaction Hydrolysis of proteins in presence of ATP.. Its function is as follows. ATP-dependent serine protease that mediates the selective degradation of misfolded and unassembled polypeptides in the peroxisomal matrix. Necessary for type 2 peroxisome targeting signal (PTS2)-containing protein processing and facilitates peroxisome matrix protein import. The protein is Lon protease homolog 2, peroxisomal of Candida dubliniensis (strain CD36 / ATCC MYA-646 / CBS 7987 / NCPF 3949 / NRRL Y-17841) (Yeast).